Reading from the N-terminus, the 496-residue chain is Aspartyl/glutamyl-tRNA(Asn/Gln) amidotransferase subunit B (496 aa).

Belongs to the GatB/GatE family. GatB subfamily. As to quaternary structure, heterotrimer of A, B and C subunits.

It carries out the reaction L-glutamyl-tRNA(Gln) + L-glutamine + ATP + H2O = L-glutaminyl-tRNA(Gln) + L-glutamate + ADP + phosphate + H(+). The catalysed reaction is L-aspartyl-tRNA(Asn) + L-glutamine + ATP + H2O = L-asparaginyl-tRNA(Asn) + L-glutamate + ADP + phosphate + 2 H(+). Its function is as follows. Allows the formation of correctly charged Asn-tRNA(Asn) or Gln-tRNA(Gln) through the transamidation of misacylated Asp-tRNA(Asn) or Glu-tRNA(Gln) in organisms which lack either or both of asparaginyl-tRNA or glutaminyl-tRNA synthetases. The reaction takes place in the presence of glutamine and ATP through an activated phospho-Asp-tRNA(Asn) or phospho-Glu-tRNA(Gln). This is Aspartyl/glutamyl-tRNA(Asn/Gln) amidotransferase subunit B from Prochlorococcus marinus (strain MIT 9303).